Consider the following 350-residue polypeptide: GTP 3',8-cyclase (350 aa).

Residues 27–245 (TFGRIATDLR…LRAHFTLVPD (219 aa)) form the Radical SAM core domain. Arg36 is a binding site for GTP. 2 residues coordinate [4Fe-4S] cluster: Cys43 and Cys47. Tyr49 serves as a coordination point for S-adenosyl-L-methionine. Cys50 provides a ligand contact to [4Fe-4S] cluster. Arg87 provides a ligand contact to GTP. Gly91 serves as a coordination point for S-adenosyl-L-methionine. Thr118 is a GTP binding site. Ser142 serves as a coordination point for S-adenosyl-L-methionine. Lys179 lines the GTP pocket. Position 213 (Met213) interacts with S-adenosyl-L-methionine. Residues Cys277 and Cys280 each contribute to the [4Fe-4S] cluster site. 282–284 (RTR) provides a ligand contact to GTP. Residue Cys294 coordinates [4Fe-4S] cluster.

Belongs to the radical SAM superfamily. MoaA family. Monomer and homodimer. [4Fe-4S] cluster is required as a cofactor.

The enzyme catalyses GTP + AH2 + S-adenosyl-L-methionine = (8S)-3',8-cyclo-7,8-dihydroguanosine 5'-triphosphate + 5'-deoxyadenosine + L-methionine + A + H(+). The protein operates within cofactor biosynthesis; molybdopterin biosynthesis. In terms of biological role, catalyzes the cyclization of GTP to (8S)-3',8-cyclo-7,8-dihydroguanosine 5'-triphosphate. This chain is GTP 3',8-cyclase, found in Mycobacterium sp. (strain JLS).